The following is a 146-amino-acid chain: Small ribosomal subunit protein bS16 (146 aa).

Positions 84-102 are enriched in basic and acidic residues; it reads SHLEAQKAAVERLGRRKDY. The disordered stretch occupies residues 84 to 146; that stretch reads SHLEAQKAAV…DAPAAEATTE (63 aa). Over residues 110–119 the composition is skewed to low complexity; sequence APKAAPVAEA. Positions 120 to 130 are enriched in acidic residues; it reads PAEEAPAEEPA. Low complexity predominate over residues 131 to 146; sequence AEASTDDAPAAEATTE.

This sequence belongs to the bacterial ribosomal protein bS16 family.

The sequence is that of Small ribosomal subunit protein bS16 from Rhodopirellula baltica (strain DSM 10527 / NCIMB 13988 / SH1).